The following is a 566-amino-acid chain: DDB1- and CUL4-associated factor 10 (566 aa).

Disordered regions lie at residues 1–72 (MFPF…AERA) and 87–123 (TASA…GAGL). Phosphoserine is present on residues Ser50, Ser57, Ser67, Ser96, Ser99, and Ser100. Residues 87 to 100 (TASASQAKLSPSSS) are compositionally biased toward low complexity. Arg141 is modified (omega-N-methylarginine). 4 WD repeats span residues 173-212 (RTHG…HIKT), 216-254 (AHED…TKVC), 258-297 (GHTS…EDGC), and 303-342 (FHTR…KSLE). The segment covering 354-374 (TTSSSDLTTTSSSSGSRVSGS) has biased composition (low complexity). The disordered stretch occupies residues 354-413 (TTSSSDLTTTSSSSGSRVSGSPCHHNDSNSTEKHMSRASQREGVSPRNSLEVLTPEVPGE). Ser356 is subject to Phosphoserine. Basic and acidic residues predominate over residues 377–388 (HHNDSNSTEKHM). WD repeat units lie at residues 415-455 (DRGN…QEGA), 477-515 (VGRG…SELV), and 533-566 (SHND…QPKF).

Belongs to the WD repeat DCAF10 family. In terms of assembly, interacts with DDB1.

The protein operates within protein modification; protein ubiquitination. May function as a substrate receptor for CUL4-DDB1 E3 ubiquitin-protein ligase complex. This Mus musculus (Mouse) protein is DDB1- and CUL4-associated factor 10 (Dcaf10).